We begin with the raw amino-acid sequence, 297 residues long: Phosphoribosylaminoimidazole-succinocarboxamide synthase (297 aa).

This sequence belongs to the SAICAR synthetase family.

The enzyme catalyses 5-amino-1-(5-phospho-D-ribosyl)imidazole-4-carboxylate + L-aspartate + ATP = (2S)-2-[5-amino-1-(5-phospho-beta-D-ribosyl)imidazole-4-carboxamido]succinate + ADP + phosphate + 2 H(+). The protein operates within purine metabolism; IMP biosynthesis via de novo pathway; 5-amino-1-(5-phospho-D-ribosyl)imidazole-4-carboxamide from 5-amino-1-(5-phospho-D-ribosyl)imidazole-4-carboxylate: step 1/2. The sequence is that of Phosphoribosylaminoimidazole-succinocarboxamide synthase from Corynebacterium diphtheriae (strain ATCC 700971 / NCTC 13129 / Biotype gravis).